The following is a 382-amino-acid chain: Farnesyl diphosphate synthase (382 aa).

Isopentenyl diphosphate-binding residues include K81, R84, and Q120. Residues D127 and D131 each coordinate Mg(2+). R136 serves as a coordination point for dimethylallyl diphosphate. R137 provides a ligand contact to isopentenyl diphosphate. The dimethylallyl diphosphate site is built by K230, T231, Q270, K287, and K296.

This sequence belongs to the FPP/GGPP synthase family. The cofactor is Mg(2+).

The protein resides in the cytoplasm. It catalyses the reaction isopentenyl diphosphate + dimethylallyl diphosphate = (2E)-geranyl diphosphate + diphosphate. The catalysed reaction is isopentenyl diphosphate + (2E)-geranyl diphosphate = (2E,6E)-farnesyl diphosphate + diphosphate. It functions in the pathway isoprenoid biosynthesis; farnesyl diphosphate biosynthesis; farnesyl diphosphate from geranyl diphosphate and isopentenyl diphosphate: step 1/1. The protein operates within isoprenoid biosynthesis; geranyl diphosphate biosynthesis; geranyl diphosphate from dimethylallyl diphosphate and isopentenyl diphosphate: step 1/1. With respect to regulation, inhibited by aminobisphosphonate drugs (aBP), such as risedronate and alendronate. Key enzyme in isoprenoid biosynthesis which catalyzes the formation of farnesyl diphosphate (FPP), a sterol precursor. Involved in the inhibition of cell growth. This chain is Farnesyl diphosphate synthase (fps), found in Dictyostelium discoideum (Social amoeba).